The chain runs to 303 residues: Cilia- and flagella-associated protein 161 (303 aa).

Microtubule inner protein component of sperm flagellar doublet microtubules.

The protein resides in the cytoplasm. It localises to the cytoskeleton. Its subcellular location is the cilium axoneme. The protein localises to the flagellum axoneme. Microtubule inner protein (MIP) part of the dynein-decorated doublet microtubules (DMTs) in cilia axoneme, which is required for motile cilia beating. This Mus musculus (Mouse) protein is Cilia- and flagella-associated protein 161.